The following is a 419-amino-acid chain: Putative zinc metalloprotease SPs1691 (419 aa).

Residue His-18 coordinates Zn(2+). Glu-19 is a catalytic residue. Residue His-22 participates in Zn(2+) binding. A run of 4 helical transmembrane segments spans residues 169–191 (LITN…ILLV), 301–323 (LAWS…FSLN), 343–365 (LESV…LIPI), and 392–411 (AYIT…AVTW). The region spanning 175-274 (GPMNNFILGI…LKTVAVKPQK (100 aa)) is the PDZ domain.

This sequence belongs to the peptidase M50B family. Zn(2+) serves as cofactor.

Its subcellular location is the cell membrane. In Streptococcus pyogenes serotype M3 (strain SSI-1), this protein is Putative zinc metalloprotease SPs1691 (eep).